We begin with the raw amino-acid sequence, 216 residues long: Uracil phosphoribosyltransferase (216 aa).

5-phospho-alpha-D-ribose 1-diphosphate-binding positions include R85, R110, and 135 to 143 (DPMVATGYS). Uracil is bound by residues I200 and 205-207 (GDA). Position 206 (D206) interacts with 5-phospho-alpha-D-ribose 1-diphosphate.

It belongs to the UPRTase family. Requires Mg(2+) as cofactor.

The catalysed reaction is UMP + diphosphate = 5-phospho-alpha-D-ribose 1-diphosphate + uracil. It functions in the pathway pyrimidine metabolism; UMP biosynthesis via salvage pathway; UMP from uracil: step 1/1. With respect to regulation, allosterically activated by GTP. Catalyzes the conversion of uracil and 5-phospho-alpha-D-ribose 1-diphosphate (PRPP) to UMP and diphosphate. The chain is Uracil phosphoribosyltransferase from Ralstonia pickettii (strain 12J).